Consider the following 102-residue polypeptide: MFAVVETGGKQYKVKEQDVIRIEKLNASVGEEVTLSNVIALTDVNNNIVFTQSATVTASVLEQCRNDKIIIFKKKRRKNYRRKNGHRQYMTVLRVIKINNME.

It belongs to the bacterial ribosomal protein bL21 family. As to quaternary structure, part of the 50S ribosomal subunit. Contacts protein L20.

This protein binds to 23S rRNA in the presence of protein L20. The chain is Large ribosomal subunit protein bL21 from Ehrlichia canis (strain Jake).